The chain runs to 729 residues: MRIFSTFVFHRRQQIFNLRQFQTTTILRNPISIAPIQIPMDATEQSLRQSLSEKSSSVEAQGNAVRALKASRAAKPEIDAAIEQLNKLKLEKSTVEKELQSIISSSGNGSLNREAFRKAVVNTLERRLFYIPSFKIYSGVAGLFDYGPPGCAIKSNVLSFWRQHFILEENMLEVDCPCVTPEVVLKASGHVDKFTDLMVKDEKTGTCYRADHLLKDYCTEKLEKDLTISAEKAAELKDVLAVMEDFSPEQLGAKIREYGITAPDTKNPLSDPYPFNLMFQTSIGPSGLIPGYMRPETAQGIFVNFKDLYYYNGKKLPFAAAQIGQAFRNEISPRQGLLRVREFTLAEIEHFVDPENKSHPKFSDVAKLEFLMFPREEQMSGQSAKKLCLGEAVAKGTVNNETLGYFIGRVYLFLTRLGIDKERLRFRQHLANEMAHYAADCWDAEIESSYGWIECVGIADRSAYDLRAHSDKSGTPLVAEEKFAEPKEVEKLVITPVKKELGLAFKGNQKNVVESLEAMNEEEAMEMKATLESKGEVEFYVCTLKKSVNIKKNMVSISKEKKKEHQRVFTPSVIEPSFGIGRIIYCLYEHCFSTRPSKAGDEQLNLFRFPPLVAPIKCTVFPLVQNQQFEEVAKVISKELASVGISHKIDITGTSIGKRYARTDELGVPFAITVDSDTSVTIRERDSKDQVRVTLKEAASVVSSVSEGKMTWQDVWATFPHHSSAAADE.

M1 is modified (N-acetylmethionine). The N-terminal 28 residues, 1-28 (MRIFSTFVFHRRQQIFNLRQFQTTTILR), are a transit peptide targeting the mitochondrion. The WHEP-TRS domain maps to 50-106 (SLSEKSSSVEAQGNAVRALKASRAAKPEIDAAIEQLNKLKLEKSTVEKELQSIISSS). Residue E296 coordinates glycine. ATP-binding positions include 328–330 (RNE) and 339–340 (RV). Residue E347 participates in glycine binding. 454–455 (EC) contributes to the ATP binding site. Glycine is bound at residue 575 to 577 (EPS). R582 is a binding site for ATP.

It belongs to the class-II aminoacyl-tRNA synthetase family. As to quaternary structure, homodimer.

The protein localises to the mitochondrion. It localises to the cytoplasm. It is found in the cytosol. It catalyses the reaction tRNA(Gly) + glycine + ATP = glycyl-tRNA(Gly) + AMP + diphosphate. The enzyme catalyses 2 ATP + H(+) = P(1),P(4)-bis(5'-adenosyl) tetraphosphate + diphosphate. Its function is as follows. Catalyzes the ATP-dependent ligation of glycine to the 3'-end of its cognate tRNA, via the formation of an aminoacyl-adenylate intermediate (Gly-AMP). Also produces diadenosine tetraphosphate (Ap4A), a universal pleiotropic signaling molecule needed for cell regulation pathways, by direct condensation of 2 ATPs. Thereby, may play a special role in Ap4A homeostasis. The chain is Glycine--tRNA ligase, mitochondrial 1 from Arabidopsis thaliana (Mouse-ear cress).